We begin with the raw amino-acid sequence, 407 residues long: Substance-P receptor (407 aa).

The Extracellular portion of the chain corresponds to 1-31 (MDNVLPMDSDLFPNISTNTSESNQFVQPTWQ). 2 N-linked (GlcNAc...) asparagine glycosylation sites follow: Asn14 and Asn18. The helical transmembrane segment at 32–54 (IVLWAAAYTVIVVTSVVGNVVVI) threads the bilayer. Residues 55–64 (WIILAHKRMR) lie on the Cytoplasmic side of the membrane. A helical transmembrane segment spans residues 65–86 (TVTNYFLVNLAFAEACMAAFNT). The Extracellular portion of the chain corresponds to 87 to 106 (VVNFTYAVHNVWYYGLFYCK). Cys105 and Cys180 form a disulfide bridge. Residues 107 to 128 (FHNFFPIAALFASIYSMTAVAF) form a helical membrane-spanning segment. The Cytoplasmic segment spans residues 129–148 (DRYMAIIHPLQPRLSATATK). A helical membrane pass occupies residues 149–169 (VVIFVIWVLALLLAFPQGYYS). Over 170-194 (TTETMPSRVVCMIEWPEHPNRTYEK) the chain is Extracellular. A helical transmembrane segment spans residues 195-219 (AYHICVTVLIYFLPLLVIGYAYTVV). Residues 220–248 (GITLWASEIPGDSSDRYHEQVSAKRKVVK) are Cytoplasmic-facing. Residues 249–270 (MMIVVVCTFAICWLPFHVFFLL) form a helical membrane-spanning segment. Topologically, residues 271-283 (PYINPDLYLKKFI) are extracellular. A helical transmembrane segment spans residues 284-308 (QQVYLASMWLAMSSTMYNPIIYCCL). Residues 309–407 (NDRFRLGFKH…SSSFYSNMLA (99 aa)) lie on the Cytoplasmic side of the membrane. Cys322 carries the S-palmitoyl cysteine lipid modification. Residues 362–407 (VGAHEEEPEEGPKATPSSLDLTSNGSSRSNSKTMTESSSFYSNMLA) are disordered. The segment covering 376–407 (TPSSLDLTSNGSSRSNSKTMTESSSFYSNMLA) has biased composition (polar residues).

Belongs to the G-protein coupled receptor 1 family. In terms of assembly, interacts with ARRB1.

It localises to the cell membrane. Functionally, this is a receptor for the tachykinin neuropeptide substance P. It is probably associated with G proteins that activate a phosphatidylinositol-calcium second messenger system. The rank order of affinity of this receptor to tachykinins is: substance P &gt; substance K &gt; neuromedin-K. In Rattus norvegicus (Rat), this protein is Substance-P receptor (Tacr1).